The primary structure comprises 341 residues: L-threonine 3-dehydrogenase (341 aa).

Cysteine 38 serves as a coordination point for Zn(2+). Active-site charge relay system residues include threonine 40 and histidine 43. Zn(2+)-binding residues include histidine 63, glutamate 64, cysteine 93, cysteine 96, cysteine 99, and cysteine 107. NAD(+)-binding positions include isoleucine 175, aspartate 195, arginine 200, 262 to 264 (LGI), and 286 to 287 (IY).

The protein belongs to the zinc-containing alcohol dehydrogenase family. As to quaternary structure, homotetramer. The cofactor is Zn(2+).

It localises to the cytoplasm. It carries out the reaction L-threonine + NAD(+) = (2S)-2-amino-3-oxobutanoate + NADH + H(+). It participates in amino-acid degradation; L-threonine degradation via oxydo-reductase pathway; glycine from L-threonine: step 1/2. Its function is as follows. Catalyzes the NAD(+)-dependent oxidation of L-threonine to 2-amino-3-ketobutyrate. This chain is L-threonine 3-dehydrogenase, found in Salmonella choleraesuis (strain SC-B67).